We begin with the raw amino-acid sequence, 599 residues long: Elongation factor 4 (599 aa).

One can recognise a tr-type G domain in the interval 4–186; it reads DNIRNFSIIA…EIVNKIPPPR (183 aa). GTP-binding positions include 16–21 and 133–136; these read DHGKST and NKID.

It belongs to the TRAFAC class translation factor GTPase superfamily. Classic translation factor GTPase family. LepA subfamily.

It is found in the cell inner membrane. The enzyme catalyses GTP + H2O = GDP + phosphate + H(+). Functionally, required for accurate and efficient protein synthesis under certain stress conditions. May act as a fidelity factor of the translation reaction, by catalyzing a one-codon backward translocation of tRNAs on improperly translocated ribosomes. Back-translocation proceeds from a post-translocation (POST) complex to a pre-translocation (PRE) complex, thus giving elongation factor G a second chance to translocate the tRNAs correctly. Binds to ribosomes in a GTP-dependent manner. The chain is Elongation factor 4 from Geotalea daltonii (strain DSM 22248 / JCM 15807 / FRC-32) (Geobacter daltonii).